Here is a 153-residue protein sequence, read N- to C-terminus: Lipoprotein signal peptidase (153 aa).

3 helical membrane-spanning segments follow: residues 7–27 (LIII…LNNY), 59–79 (NLIR…IFYM), and 93–113 (SIII…GSVI). Residues Asp114 and Asp132 contribute to the active site. The helical transmembrane segment at 123 to 143 (WHFPVFNFADISIFIGFLILI) threads the bilayer.

The protein belongs to the peptidase A8 family.

It localises to the cell membrane. It catalyses the reaction Release of signal peptides from bacterial membrane prolipoproteins. Hydrolyzes -Xaa-Yaa-Zaa-|-(S,diacylglyceryl)Cys-, in which Xaa is hydrophobic (preferably Leu), and Yaa (Ala or Ser) and Zaa (Gly or Ala) have small, neutral side chains.. It functions in the pathway protein modification; lipoprotein biosynthesis (signal peptide cleavage). This protein specifically catalyzes the removal of signal peptides from prolipoproteins. The protein is Lipoprotein signal peptidase of Wigglesworthia glossinidia brevipalpis.